The following is a 533-amino-acid chain: Atypical kinase COQ8B, mitochondrial (533 aa).

A helical transmembrane segment spans residues 93-109 (LASFGGLAVGLGLGALA). The KxGQ motif signature appears at 156–159 (KIGQ). Residues 192 to 424 (MMRVLEEELG…DRVLQKSQDL (233 aa)) form the Protein kinase domain. The AAAS motif signature appears at 217-220 (AAAS). ATP-binding positions include serine 220, lysine 238, and 325 to 328 (MELA). Aspartate 368 functions as the Proton acceptor in the catalytic mechanism. Residues asparagine 373 and aspartate 387 each coordinate ATP.

The protein belongs to the protein kinase superfamily. ADCK protein kinase family. In terms of assembly, homodimer; homodimerizes via its transmembrane region. Interacts with COQ6 and COQ7. Interacts with the multi-subunit COQ enzyme complex, composed of at least COQ3, COQ4, COQ5, COQ6, COQ7 and COQ9.

Its subcellular location is the mitochondrion membrane. It localises to the cytoplasm. The protein resides in the cytosol. The protein localises to the cell membrane. The protein operates within cofactor biosynthesis; ubiquinone biosynthesis. Its function is as follows. Atypical kinase involved in the biosynthesis of coenzyme Q, also named ubiquinone, an essential lipid-soluble electron transporter for aerobic cellular respiration. Its substrate specificity is still unclear: may act as a protein kinase that mediates phosphorylation of COQ3. According to other reports, acts as a small molecule kinase, possibly a lipid kinase that phosphorylates a prenyl lipid in the ubiquinone biosynthesis pathway, as suggested by its ability to bind coenzyme Q lipid intermediates. However, the small molecule kinase activity was not confirmed by another publication. Required for podocyte migration. The polypeptide is Atypical kinase COQ8B, mitochondrial (Mus musculus (Mouse)).